Here is a 398-residue protein sequence, read N- to C-terminus: Keratinocyte differentiation factor 1 (398 aa).

2 disordered regions span residues 1-60 and 123-156; these read MPRP…SITF and AEAN…STMG. The span at 44-55 shows a compositional bias: basic and acidic residues; it reads RPDPKDPGHHGP. The residue at position 218 (Ser218) is a Phosphoserine. Disordered regions lie at residues 307 to 340 and 369 to 392; these read RKSR…TMVG and GAPG…SGAP. A compositionally biased stretch (polar residues) spans 377–389; the sequence is HDSSFQGTDTDSS.

It is found in the cytoplasm. The protein localises to the cell junction. Plays a role in the regulation of the epidermis formation during early development. Required both as an inhibitor of basal cell proliferation and a promoter of differentiation of basal progenitor cell progeny. This Homo sapiens (Human) protein is Keratinocyte differentiation factor 1 (KDF1).